Reading from the N-terminus, the 633-residue chain is Replication protein E1 (633 aa).

The Nuclear localization signal motif lies at 84-86 (KRK). Phosphoserine; by host is present on residues S90, S94, and S108. The Nuclear export signal signature appears at 107-116 (LSPRLGAISL). The tract at residues 148–168 (NTEGTDETETDQVQTVSGETT) is disordered. Residues 158 to 168 (DQVQTVSGETT) are compositionally biased toward polar residues. Residues 169 to 335 (TDSLGRQQIT…QTVIEYSLAD (167 aa)) form a DNA-binding region region. The SF3 helicase domain occupies 434-584 (VDFISFMIAL…FPFDSNGNPV (151 aa)). 460–467 (GPPDTGKS) is a binding site for ATP. K541 participates in a covalent cross-link: Glycyl lysine isopeptide (Lys-Gly) (interchain with G-Cter in SUMO). A disordered region spans residues 609–633 (DNEEEENGDPSNTFRCVPGKASRPI).

It belongs to the papillomaviridae E1 protein family. In terms of assembly, can form hexamers. Interacts with E2 protein; this interaction increases E1 DNA binding specificity. Interacts with host DNA polymerase subunit POLA2. Interacts with host single stranded DNA-binding protein RPA1. Interacts with host TOP1; this interaction stimulates the enzymatic activity of TOP1. Post-translationally, phosphorylated. In terms of processing, sumoylated.

It is found in the host nucleus. The enzyme catalyses Couples ATP hydrolysis with the unwinding of duplex DNA by translocating in the 3'-5' direction.. It catalyses the reaction ATP + H2O = ADP + phosphate + H(+). Functionally, ATP-dependent DNA 3'-5' helicase required for initiation of viral DNA replication. It forms a complex with the viral E2 protein. The E1-E2 complex binds to the replication origin which contains binding sites for both proteins. During the initial step, a dimer of E1 interacts with a dimer of protein E2 leading to a complex that binds the viral origin of replication with high specificity. Then, a second dimer of E1 displaces the E2 dimer in an ATP-dependent manner to form the E1 tetramer. Following this, two E1 monomers are added to each half of the site, which results in the formation of two E1 trimers on the viral ori. Subsequently, two hexamers will be created. The double hexamer acts as a bi-directional helicase machinery and unwinds the viral DNA and then recruits the host DNA polymerase to start replication. The chain is Replication protein E1 from Homo sapiens (Human).